Reading from the N-terminus, the 108-residue chain is MKKNTHPEYRQVLFVDSSTGYKFVCGSTYQTDKTEVFEGQEYPVCYVSVSSSSHPFFTGSKKLVDAEGRVDKFLKRYSGVKQMAPKPETSVEEVLPKGKKKAPAKKKK.

Positions Pro-85–Lys-108 are disordered. Residues Lys-97–Lys-108 are compositionally biased toward basic residues.

Belongs to the bacterial ribosomal protein bL31 family. Type B subfamily. Part of the 50S ribosomal subunit.

The sequence is that of Large ribosomal subunit protein bL31B from Chlamydia muridarum (strain MoPn / Nigg).